The sequence spans 345 residues: Protoheme IX farnesyltransferase (345 aa).

The next 9 membrane-spanning stretches (helical) occupy residues 33-53 (VMSLVVFTALTGLLAARTPIH), 54-74 (PLLGAVAVLCIAIGAGASGAL), 105-125 (ATLGVVLSLLSVMLMGMAINW), 126-146 (LAAGLLAFTIVFYAVVYTMWL), 154-174 (IVIGGLAGALPPAIGWAAATG), 182-202 (LMVLIIFLWTPPHFWALSLYI), 226-246 (QILLYSLALIPVCLAPAFTGL), 247-267 (GGWLYLAVSGLGGLVFLTLAV), and 315-335 (ILYLFALFAALLAEAVLGLPI).

It belongs to the UbiA prenyltransferase family. Protoheme IX farnesyltransferase subfamily.

The protein localises to the cell inner membrane. It carries out the reaction heme b + (2E,6E)-farnesyl diphosphate + H2O = Fe(II)-heme o + diphosphate. It functions in the pathway porphyrin-containing compound metabolism; heme O biosynthesis; heme O from protoheme: step 1/1. Functionally, converts heme B (protoheme IX) to heme O by substitution of the vinyl group on carbon 2 of heme B porphyrin ring with a hydroxyethyl farnesyl side group. This is Protoheme IX farnesyltransferase from Caulobacter sp. (strain K31).